A 156-amino-acid chain; its full sequence is Histone H2B.2 (156 aa).

Basic and acidic residues-rich tracts occupy residues 1-10 (MAPKKDEKPA) and 24-58 (AKAE…GEKK). Residues 1–63 (MAPKKDEKPA…DGEKKDKKKK (63 aa)) form a disordered region. Residues Lys40 and Lys41 each carry the N6-acetyllysine modification. Residue Lys152 forms a Glycyl lysine isopeptide (Lys-Gly) (interchain with G-Cter in ubiquitin) linkage.

It belongs to the histone H2B family. The nucleosome is a histone octamer containing two molecules each of H2A, H2B, H3 and H4 assembled in one H3-H4 heterotetramer and two H2A-H2B heterodimers. The octamer wraps approximately 147 bp of DNA. Post-translationally, the N-terminus is blocked. Can be acetylated to form H2BK33ac and H2BK34ac. Acetylated mainly on the ubiquitinated form. In terms of processing, monoubiquitinated to form H2BK143ub1; which is increased during the light period and may give a specific tag for epigenetic transcriptional activation.

The protein resides in the nucleus. The protein localises to the chromosome. In terms of biological role, core component of nucleosome. Nucleosomes wrap and compact DNA into chromatin, limiting DNA accessibility to the cellular machineries which require DNA as a template. Histones thereby play a central role in transcription regulation, DNA repair, DNA replication and chromosomal stability. DNA accessibility is regulated via a complex set of post-translational modifications of histones, also called histone code, and nucleosome remodeling. The protein is Histone H2B.2 of Chlamydomonas reinhardtii (Chlamydomonas smithii).